The following is a 185-amino-acid chain: Probable chorismate pyruvate-lyase 1 (185 aa).

Residues Arg-70, Leu-108, and Glu-166 each contribute to the substrate site.

The protein belongs to the UbiC family.

The protein resides in the cytoplasm. It carries out the reaction chorismate = 4-hydroxybenzoate + pyruvate. The protein operates within cofactor biosynthesis; ubiquinone biosynthesis. Functionally, removes the pyruvyl group from chorismate, with concomitant aromatization of the ring, to provide 4-hydroxybenzoate (4HB) for the ubiquinone pathway. This Pseudomonas fluorescens (strain Pf0-1) protein is Probable chorismate pyruvate-lyase 1.